Reading from the N-terminus, the 275-residue chain is MRNTVSTFQELKNKGEKITMLTAYDYSMAKLIDSSGINGILVGDSLGMVCLGYENTLSVTMEDMLHHTKAVVRGTSNALVVGDMPFMSYQTSIYDAVYNAGRFIKEAGAHAVKLEGGATVAEEIKAIVKAQIPVMGHIGLTPQSVNMFGGFKVQGKNEKVAKKLIEDAKILEEAGAFAIVLECIPEKLSKIISESISIPTIGIGAGKYCDGQILVYQDMLSMFSDFKPKFVKSFGSIGESIKDGVSQYIKEVKEAKFPEEKHAFKIDDDVINKLY.

Mg(2+) is bound by residues Asp44 and Asp83. 3-methyl-2-oxobutanoate-binding positions include 44-45 (DS), Asp83, and Lys113. Glu115 is a Mg(2+) binding site. Residue Glu182 is the Proton acceptor of the active site.

This sequence belongs to the PanB family. As to quaternary structure, homodecamer; pentamer of dimers. Requires Mg(2+) as cofactor.

It localises to the cytoplasm. The enzyme catalyses 3-methyl-2-oxobutanoate + (6R)-5,10-methylene-5,6,7,8-tetrahydrofolate + H2O = 2-dehydropantoate + (6S)-5,6,7,8-tetrahydrofolate. It participates in cofactor biosynthesis; (R)-pantothenate biosynthesis; (R)-pantoate from 3-methyl-2-oxobutanoate: step 1/2. Functionally, catalyzes the reversible reaction in which hydroxymethyl group from 5,10-methylenetetrahydrofolate is transferred onto alpha-ketoisovalerate to form ketopantoate. This is 3-methyl-2-oxobutanoate hydroxymethyltransferase from Clostridium botulinum (strain Loch Maree / Type A3).